Consider the following 283-residue polypeptide: Phosphate import ATP-binding protein PstB 1 (283 aa).

Acidic residues predominate over residues 1–16 (MSSDDTTDPTADDESF). The tract at residues 1–35 (MSSDDTTDPTADDESFTDSPVAGLEQSTTTRGSGR) is disordered. The ABC transporter domain occupies 38–278 (ISARNINVWY…PSSERVENYI (241 aa)). 70–77 (GPSGCGKS) is a binding site for ATP.

Belongs to the ABC transporter superfamily. Phosphate importer (TC 3.A.1.7) family. As to quaternary structure, the complex is composed of two ATP-binding proteins (PstB), two transmembrane proteins (PstC and PstA) and a solute-binding protein (PstS).

The protein resides in the cell membrane. It catalyses the reaction phosphate(out) + ATP + H2O = ADP + 2 phosphate(in) + H(+). Its function is as follows. Part of the ABC transporter complex PstSACB involved in phosphate import. Responsible for energy coupling to the transport system. The protein is Phosphate import ATP-binding protein PstB 1 of Natronomonas pharaonis (strain ATCC 35678 / DSM 2160 / CIP 103997 / JCM 8858 / NBRC 14720 / NCIMB 2260 / Gabara) (Halobacterium pharaonis).